Here is an 855-residue protein sequence, read N- to C-terminus: DNA mismatch repair protein MutS (855 aa).

616-623 (GPNMGGKS) lines the ATP pocket.

It belongs to the DNA mismatch repair MutS family.

In terms of biological role, this protein is involved in the repair of mismatches in DNA. It is possible that it carries out the mismatch recognition step. This protein has a weak ATPase activity. The sequence is that of DNA mismatch repair protein MutS from Salmonella paratyphi C (strain RKS4594).